Reading from the N-terminus, the 105-residue chain is Large ribosomal subunit protein eL36 (105 aa).

The interval 1–36 (MAQERSGIAVGLNKGHKTTPLNTPKTRISRSKGKAS) is disordered. The span at 27 to 36 (RISRSKGKAS) shows a compositional bias: basic residues.

This sequence belongs to the eukaryotic ribosomal protein eL36 family. Component of the large ribosomal subunit (LSU).

The protein localises to the cytoplasm. Its function is as follows. Component of the ribosome, a large ribonucleoprotein complex responsible for the synthesis of proteins in the cell. The small ribosomal subunit (SSU) binds messenger RNAs (mRNAs) and translates the encoded message by selecting cognate aminoacyl-transfer RNA (tRNA) molecules. The large subunit (LSU) contains the ribosomal catalytic site termed the peptidyl transferase center (PTC), which catalyzes the formation of peptide bonds, thereby polymerizing the amino acids delivered by tRNAs into a polypeptide chain. The nascent polypeptides leave the ribosome through a tunnel in the LSU and interact with protein factors that function in enzymatic processing, targeting, and the membrane insertion of nascent chains at the exit of the ribosomal tunnel. The chain is Large ribosomal subunit protein eL36 from Emericella nidulans (strain FGSC A4 / ATCC 38163 / CBS 112.46 / NRRL 194 / M139) (Aspergillus nidulans).